The chain runs to 367 residues: Innexin inx2 (367 aa).

Topologically, residues 1-22 (MFDVFGSVKGLLKIDQVCIDNN) are cytoplasmic. Residues 23–43 (VFRMHYKATVIILIAFSLLVT) traverse the membrane as a helical segment. The Extracellular portion of the chain corresponds to 44 to 109 (SRQYIGDPID…EDEVKYHKYY (66 aa)). The chain crosses the membrane as a helical span at residues 110–130 (QWVCFVLFFQAILFYVPRYLW). The interaction with shg stretch occupies residues 130 to 179 (WKSWEGGRLKMLVMDLNSPIVNDECKNDRKKILVDYFIGNLNRHNFYAFR). The Cytoplasmic portion of the chain corresponds to 131 to 179 (KSWEGGRLKMLVMDLNSPIVNDECKNDRKKILVDYFIGNLNRHNFYAFR). Residues 180-200 (FFVCEALNFVNVIGQIYFVDF) form a helical membrane-spanning segment. Over 201 to 266 (FLDGEFSTYG…VLPLNIVNEK (66 aa)) the chain is Extracellular. A helical membrane pass occupies residues 267–287 (IYVFLWFWFIILSIMSGISLI). Residues 288-367 (YRIAVVAGPK…HSAHKRPFDA (80 aa)) are Cytoplasmic-facing.

Belongs to the pannexin family. Monomer and heterooligomer with ogre or Inx3 (via cytoplasmic C-terminal region). Interacts (via cytoplasmic loop) with shg (via cytoplasmic region). Interacts with arm. In ovary, expressed in inner germarial sheath cells, prefollicular cells, follicle cells, nurse cells and oocytes. Expressed in embryonic epithelial cells. Expressed in foregut and hindgut from stage 11-17, segmentally repeated tracheal placodes at stage 14, salivary gland at stage 16 and proventriculus at stage 16-17 (at protein level). During germband extension stage (stage 7), expressed in epidermal epithelial cells. Expressed in cephalic furrow. Repeating epidermal pattern emerges at stage 11, refines to one or two cells at each side of the segment borders by stage 13. Expressed in the imaginal wing disk. In pupae, expressed in the CNS and in primary, secondary and tertiary pigment cells of the retina. Expressed in optic lamina of the adult CNS.

It is found in the cell membrane. The protein resides in the cell junction. The protein localises to the gap junction. It localises to the cytoplasm. Its subcellular location is the apical cell membrane. It is found in the apicolateral cell membrane. The protein resides in the basolateral cell membrane. The protein localises to the lateral cell membrane. Structural components of the gap junctions. Involved in gap junctional communication between germline and somatic cells which is essential for normal oogenesis. In embryonic epidermis, required for epithelial morphogenesis. Required for keyhole formation during early stages of proventriculus development in response to wg signaling. In follicle cells, promotes the formation of egg chambers in part through regulation of shg and baz at the boundary between germ cells and follicle cells. In inner germarial sheath cells, required for survival of early germ cells and for cyst formation. The sequence is that of Innexin inx2 (Inx2) from Drosophila melanogaster (Fruit fly).